Consider the following 379-residue polypeptide: Tryptophan 2,3-dioxygenase (379 aa).

Residues 57–61 and Arg-128 each bind substrate; that span reads FIITH. His-312 is a binding site for heme. Thr-327 provides a ligand contact to substrate.

Belongs to the tryptophan 2,3-dioxygenase family. Homotetramer. Dimer of dimers. Heme is required as a cofactor.

The catalysed reaction is L-tryptophan + O2 = N-formyl-L-kynurenine. Its pathway is amino-acid degradation; L-tryptophan degradation via kynurenine pathway; L-kynurenine from L-tryptophan: step 1/2. It participates in pigment biosynthesis; ommochrome biosynthesis. Functionally, heme-dependent dioxygenase that catalyzes the oxidative cleavage of the L-tryptophan (L-Trp) pyrrole ring and converts L-tryptophan to N-formyl-L-kynurenine. Catalyzes the oxidative cleavage of the indole moiety. The sequence is that of Tryptophan 2,3-dioxygenase from Drosophila erecta (Fruit fly).